Here is a 245-residue protein sequence, read N- to C-terminus: Small ribosomal subunit protein uS2 (245 aa).

It belongs to the universal ribosomal protein uS2 family.

The sequence is that of Small ribosomal subunit protein uS2 from Pseudomonas fluorescens (strain ATCC BAA-477 / NRRL B-23932 / Pf-5).